The following is a 3078-amino-acid chain: Probable polyketide synthase 44 (3078 aa).

Residues 10–435 (DNDVAIIGIG…GSNACLILTE (426 aa)) enclose the Ketosynthase family 3 (KS3) domain. Residues Cys175, His320, and His358 each act as for beta-ketoacyl synthase activity in the active site. An acyl/malonyl transferase region spans residues 627-660 (GILASISIGHSLGEVSSAVCSGMIDLETGCFIIY). Ser637 (for acyl/malonyl transferase activity) is an active-site residue. The interval 952-1072 (TNHLGYRNER…GRLSTTKHND (121 aa)) is N-terminal hotdog fold. Residues 952 to 1239 (TNHLGYRNER…YTQLTPYKNQ (288 aa)) form the PKS/mFAS DH domain. Residue His984 is the Proton acceptor; for dehydratase activity of the active site. The tract at residues 1088–1239 (NFVTIQKKEL…YTQLTPYKNQ (152 aa)) is C-terminal hotdog fold. Asp1150 acts as the Proton donor; for dehydratase activity in catalysis. A coiled-coil region spans residues 2080–2119 (LENIKTDLSNKNDNNNNNNNNNNDNKESNIKELLDNDDDE). The tract at residues 2087–2108 (LSNKNDNNNNNNNNNNDNKESN) is disordered. Over residues 2090 to 2102 (KNDNNNNNNNNNN) the composition is skewed to low complexity. Positions 2558–2636 (SDDLSIREQI…QLIQSVTDAM (79 aa)) constitute a Carrier domain. Ser2596 is modified (O-(pantetheine 4'-phosphoryl)serine). A helical transmembrane segment spans residues 2694 to 2714 (NTVFLTGSSGFIGIYILFYLI).

Pantetheine 4'-phosphate is required as a cofactor.

Its subcellular location is the membrane. In terms of biological role, probable polyketide synthase. This Dictyostelium discoideum (Social amoeba) protein is Probable polyketide synthase 44 (pks44).